Here is a 553-residue protein sequence, read N- to C-terminus: MKSDIEIDHSIKALPITEIGKQIGLSDSQLIPYGHDKAKIDAYSIANMPRQGKLVLVTSINPTPAGEGKTTVTIGLVDAINRLGKSAIGALREPSMGPVFGLKGGATGGGYAQVIPMEDINLHFTGDIHAVSAAHNLLAAVIDNHLHQGNELKIDPENIYWRRVLDMNDRALRQITLGKGRVNGPERNSGFDITASSEIMAVLTLSKNLFDLKKRLSRIVVALDVQGKPVTVADLKVAGALTAILKDAINPNLVQSLEHSPFIIHGGPFANIAQGTNSVVATDAALKLADFAVTEAGFGSDLGGEKFMDVKVPVLGKEPDAVVIVATVKALKFHGGVALDHLSDKNVDAVRNGLDNLNRHLEAMTHYGKPVVVALNKFLDDDMEEIQLIKNFVEGEKKLQFEIVTSFVDGFEGSLDLAKKVIEATDNQRFFMPLYQADDSIENKIQTIVEKIYGGKDFELSDRAKKDLAEVKENGWGKLPVVIAKTPNSLTDDSKIHGAPTGFTIHIRRFIPKIGAGFIVAMAGKVLMMPGLGKNPAAEKIDVDENGKISGLS.

63–70 (TPAGEGKT) provides a ligand contact to ATP.

It belongs to the formate--tetrahydrofolate ligase family.

It catalyses the reaction (6S)-5,6,7,8-tetrahydrofolate + formate + ATP = (6R)-10-formyltetrahydrofolate + ADP + phosphate. Its pathway is one-carbon metabolism; tetrahydrofolate interconversion. The sequence is that of Formate--tetrahydrofolate ligase from Oenococcus oeni (strain ATCC BAA-331 / PSU-1).